Reading from the N-terminus, the 217-residue chain is Trimethylamine corrinoid protein (217 aa).

Residues 1–92 form the B12-binding N-terminal domain; it reads MANKEEIIAK…EMEKRKSQTK (92 aa). The B12-binding domain occupies 94–217; sequence LGTVAIGTIE…VAKVKAALNV (124 aa). Position 107 (histidine 107) interacts with methylcob(III)alamin.

It belongs to the methylamine corrinoid protein family. Can form a complex with MttB.

It participates in one-carbon metabolism; methanogenesis from trimethylamine. In terms of biological role, acts probably as a methyl group carrier between MttB and either MtbA or MtaA. This is Trimethylamine corrinoid protein from Methanosarcina barkeri.